We begin with the raw amino-acid sequence, 92 residues long: Small ribosomal subunit protein uS19c (92 aa).

The protein belongs to the universal ribosomal protein uS19 family.

It is found in the plastid. The protein localises to the chloroplast. In terms of biological role, protein S19 forms a complex with S13 that binds strongly to the 16S ribosomal RNA. This chain is Small ribosomal subunit protein uS19c, found in Ostreococcus tauri.